A 310-amino-acid polypeptide reads, in one-letter code: p-hydroxybenzoic acid efflux pump subunit AaeA (310 aa).

The chain crosses the membrane as a helical span at residues 12–32; that stretch reads AITLVLVILAFIAIFRAWVYY.

The protein belongs to the membrane fusion protein (MFP) (TC 8.A.1) family.

The protein localises to the cell inner membrane. In terms of biological role, forms an efflux pump with AaeB. The chain is p-hydroxybenzoic acid efflux pump subunit AaeA from Citrobacter koseri (strain ATCC BAA-895 / CDC 4225-83 / SGSC4696).